The chain runs to 663 residues: MNGKLYHGACFYPELWDEDVLDEDIRMMERIGINVVRIGEFAWSRMEPEKGRIDVGFFADVIRKLRDNKIETVMCTPTATPPIWLTHGHPERMHVNEKGETMGHGSRQHACTNHPYFRERARLIIKHIAKEIGELPGLIGWQLDNEFKCHVAECICETCRTLWHKWLEDRYQTIDRLNEAWGTGVWSETYQCFEQVPQPGPTPFLHNSSLRTMYQLFSMDKISEFAREQAEVIRAYSDAPITHNSSVMFGVDHEDLFKSLDFASFDTYASQENSQAFLFNCDLWRNIKKGRPFWIMETSPSYSASLESYAAPHQNGYLKAEAVSSYALGGAAFCYWLWRQQRAGSEQPHGSVLSAWGEPDVGYENVLEAERARREVEHIMLATAPLQAETAVVYSDRAKVFLKTEPHRGLHYRTLITEFYDRLLKMGIHRDVILEGSPLDGYKLLFTPFIHYLPPAFIKKAEAFAQSGGIWIAGPLTGGRTEHHTIHTDCGLGPLEKCSGVKTLFTFPMDERNSSGTAFGVKAPLSLWSAVFEAGGTKAVGMIEKGPASGKAFITEHKCGKGKIVMLGSMPAGEAGDIMMKKLISHYAEEAGVEQKTDVTPGTVVAPRKGADGLVWVVINMDGKGGAVTLDGNGTDLLSGRPVTGRVTLGPHDYRVILLSENK.

Arg107 is a binding site for substrate. Cys111 contacts Zn(2+). Asn145 is a binding site for substrate. Glu146 functions as the Proton donor in the catalytic mechanism. Residues Cys154, Cys156, and Cys159 each contribute to the Zn(2+) site. The active-site Nucleophile is the Glu297. A substrate-binding site is contributed by 346-349 (EQPH).

It belongs to the glycosyl hydrolase 42 family. In terms of assembly, homotrimer.

The enzyme catalyses Hydrolysis of terminal non-reducing beta-D-galactose residues in beta-D-galactosides.. Its function is as follows. May play a role in the degradation of rhamnogalacturonan derived from plant cell walls. This chain is Beta-galactosidase YesZ (yesZ), found in Bacillus licheniformis (strain ATCC 14580 / DSM 13 / JCM 2505 / CCUG 7422 / NBRC 12200 / NCIMB 9375 / NCTC 10341 / NRRL NRS-1264 / Gibson 46).